The chain runs to 143 residues: Large ribosomal subunit protein uL11 (143 aa).

It belongs to the universal ribosomal protein uL11 family. Part of the ribosomal stalk of the 50S ribosomal subunit. Interacts with L10 and the large rRNA to form the base of the stalk. L10 forms an elongated spine to which L12 dimers bind in a sequential fashion forming a multimeric L10(L12)X complex. In terms of processing, one or more lysine residues are methylated.

In terms of biological role, forms part of the ribosomal stalk which helps the ribosome interact with GTP-bound translation factors. This chain is Large ribosomal subunit protein uL11, found in Borreliella afzelii (strain PKo) (Borrelia afzelii).